A 508-amino-acid chain; its full sequence is UTP--glucose-1-phosphate uridylyltransferase (508 aa).

At Ser13 the chain carries Phosphoserine. UTP contacts are provided by residues 113–116 (LNGG), Lys127, Gln190, and Gly222. 115-116 (GG) contacts substrate. Lys127 contributes to the Mg(2+) binding site. Residues His223 and 251–253 (NID) each bind substrate. The UTP site is built by Asp253 and Lys396. A Mg(2+)-binding site is contributed by Asp253. Lys396 is a catalytic residue. Residue Thr426 is modified to Phosphothreonine. Residue Ser434 is modified to Phosphoserine. Lys438 is modified (N6-acetyllysine). Ser448 and Ser461 each carry phosphoserine. The tract at residues 457–508 (HLTVSGDVTFGKNVSLKGTVIIIXNHGDRIDIPPGAVLENKIVSGNLRILDH) is oligomerization. The interval 502–503 (NL) is critical for end-to-end subunit interaction.

The protein belongs to the UDPGP type 1 family. In terms of assembly, homooctamer.

It is found in the cytoplasm. The enzyme catalyses alpha-D-glucose 1-phosphate + UTP + H(+) = UDP-alpha-D-glucose + diphosphate. It functions in the pathway glycan biosynthesis; glycogen biosynthesis. Its function is as follows. UTP--glucose-1-phosphate uridylyltransferase catalyzing the conversion of glucose-1-phosphate into UDP-glucose, a crucial precursor for the production of glycogen. This is UTP--glucose-1-phosphate uridylyltransferase (UGP2) from Sus scrofa (Pig).